A 107-amino-acid chain; its full sequence is Prostate collagen triple helix protein (107 aa).

Residues 47 to 107 (PLIPRTPGSP…PTSPLFPFCP (61 aa)) are disordered. The span at 81–100 (VGPKGPMLPLGPSGPVGPTS) shows a compositional bias: low complexity.

As to expression, expressed in prostate and testis. Weakly or not expressed in other tissues. Overexpressed in prostate cancers.

The protein resides in the cytoplasm. Its function is as follows. May be involved in growth and survival of prostate cancer cells through the TAF-Ibeta pathway. The sequence is that of Prostate collagen triple helix protein (PCOTH) from Homo sapiens (Human).